The following is a 74-amino-acid chain: Large ribosomal subunit protein bL31 (74 aa).

The protein belongs to the bacterial ribosomal protein bL31 family. Type A subfamily. In terms of assembly, part of the 50S ribosomal subunit.

Binds the 23S rRNA. This Afipia carboxidovorans (strain ATCC 49405 / DSM 1227 / KCTC 32145 / OM5) (Oligotropha carboxidovorans) protein is Large ribosomal subunit protein bL31.